Reading from the N-terminus, the 221-residue chain is Octanoyltransferase (221 aa).

A BPL/LPL catalytic domain is found at 36–221 (KKEDNQLFFC…LRSIFMEIFA (186 aa)). Substrate-binding positions include 81–88 (RGGDITYH), 154–156 (AIG), and 167–169 (GFA). The Acyl-thioester intermediate role is filled by Cys185.

The protein belongs to the LipB family.

Its subcellular location is the cytoplasm. It carries out the reaction octanoyl-[ACP] + L-lysyl-[protein] = N(6)-octanoyl-L-lysyl-[protein] + holo-[ACP] + H(+). It functions in the pathway protein modification; protein lipoylation via endogenous pathway; protein N(6)-(lipoyl)lysine from octanoyl-[acyl-carrier-protein]: step 1/2. Catalyzes the transfer of endogenously produced octanoic acid from octanoyl-acyl-carrier-protein onto the lipoyl domains of lipoate-dependent enzymes. Lipoyl-ACP can also act as a substrate although octanoyl-ACP is likely to be the physiological substrate. The sequence is that of Octanoyltransferase from Parabacteroides distasonis (strain ATCC 8503 / DSM 20701 / CIP 104284 / JCM 5825 / NCTC 11152).